Reading from the N-terminus, the 244-residue chain is Triosephosphate isomerase (244 aa).

Position 9–11 (9–11) interacts with substrate; sequence NWK. His-93 serves as the catalytic Electrophile. Catalysis depends on Glu-160, which acts as the Proton acceptor. Residues Gly-166 and Ser-206 each contribute to the substrate site.

This sequence belongs to the triosephosphate isomerase family. In terms of assembly, homodimer.

Its subcellular location is the cytoplasm. It catalyses the reaction D-glyceraldehyde 3-phosphate = dihydroxyacetone phosphate. The protein operates within carbohydrate biosynthesis; gluconeogenesis. It participates in carbohydrate degradation; glycolysis; D-glyceraldehyde 3-phosphate from glycerone phosphate: step 1/1. Functionally, involved in the gluconeogenesis. Catalyzes stereospecifically the conversion of dihydroxyacetone phosphate (DHAP) to D-glyceraldehyde-3-phosphate (G3P). This is Triosephosphate isomerase from Mycoplasma genitalium (strain ATCC 33530 / DSM 19775 / NCTC 10195 / G37) (Mycoplasmoides genitalium).